We begin with the raw amino-acid sequence, 42 residues long: F420-non-reducing hydrogenase vhu subunit U (42 aa).

Residues selenocysteine 21 and cysteine 24 each contribute to the Ni(2+) site. A non-standard amino acid (selenocysteine) is located at residue selenocysteine 21. Residues 28–42 constitute a propeptide, removed in mature form; that stretch reads VLDRVKFRIERKDED.

Belongs to the [NiFe]/[NiFeSe] hydrogenase large subunit family. As to quaternary structure, the F420-non-reducing hydrogenase vhu is composed of four subunits; VhuA, VhuD, VhuG and VhuU. Requires Ni(2+) as cofactor.

In Methanopyrus kandleri (strain AV19 / DSM 6324 / JCM 9639 / NBRC 100938), this protein is F420-non-reducing hydrogenase vhu subunit U (vhuU).